The following is a 644-amino-acid chain: Core protein VP4 (644 aa).

It belongs to the orbivirus VP4 family.

It localises to the virion. Its function is as follows. The VP4 protein is one of the five proteins (with VP1, VP3, VP6 and VP7) which form the inner capsid of the virus. The sequence is that of Core protein VP4 (Segment-4) from Bluetongue virus 13 (isolate USA) (BTV 13).